The chain runs to 41 residues: Large ribosomal subunit protein bL36 (41 aa).

Belongs to the bacterial ribosomal protein bL36 family.

The sequence is that of Large ribosomal subunit protein bL36 from Xanthobacter autotrophicus (strain ATCC BAA-1158 / Py2).